Reading from the N-terminus, the 671-residue chain is Acetyl-coenzyme A synthetase 1 (671 aa).

Residues 210-213 and threonine 329 each bind CoA; that span reads RGGK. Residues 405 to 407, 429 to 434, aspartate 520, and arginine 535 each bind ATP; these read GEP and DTYWQT. Position 543 (serine 543) interacts with CoA. Arginine 546 provides a ligand contact to ATP. Residue arginine 605 coordinates CoA.

It belongs to the ATP-dependent AMP-binding enzyme family.

It carries out the reaction acetate + ATP + CoA = acetyl-CoA + AMP + diphosphate. This is Acetyl-coenzyme A synthetase 1 (ACS1) from Debaryomyces hansenii (strain ATCC 36239 / CBS 767 / BCRC 21394 / JCM 1990 / NBRC 0083 / IGC 2968) (Yeast).